Reading from the N-terminus, the 183-residue chain is Ribulose bisphosphate carboxylase small subunit, chloroplastic 7 (183 aa).

The transit peptide at 1 to 43 (MAAAMMNKTVVVGKESVKGGVAPKVAMSRGGFLNSGIMKKDRD) directs the protein to the chloroplast.

This sequence belongs to the RuBisCO small chain family. As to quaternary structure, heterohexadecamer of 8 large and 8 small subunits.

The protein resides in the plastid. Its subcellular location is the chloroplast. RuBisCO catalyzes two reactions: the carboxylation of D-ribulose 1,5-bisphosphate, the primary event in carbon dioxide fixation, as well as the oxidative fragmentation of the pentose substrate. Both reactions occur simultaneously and in competition at the same active site. Although the small subunit is not catalytic it is essential for maximal activity. This chain is Ribulose bisphosphate carboxylase small subunit, chloroplastic 7, found in Acetabularia peniculus (Green alga).